The primary structure comprises 217 residues: 7-cyano-7-deazaguanine synthase (217 aa).

ATP is bound at residue 10-20 (FSGGQDSTTCL). Residues Cys185, Cys194, Cys197, and Cys200 each contribute to the Zn(2+) site.

It belongs to the QueC family. Homodimer. The cofactor is Zn(2+).

It carries out the reaction 7-carboxy-7-deazaguanine + NH4(+) + ATP = 7-cyano-7-deazaguanine + ADP + phosphate + H2O + H(+). Its pathway is purine metabolism; 7-cyano-7-deazaguanine biosynthesis. In terms of biological role, catalyzes the ATP-dependent conversion of 7-carboxy-7-deazaguanine (CDG) to 7-cyano-7-deazaguanine (preQ(0)). This chain is 7-cyano-7-deazaguanine synthase, found in Streptococcus thermophilus (strain CNRZ 1066).